We begin with the raw amino-acid sequence, 129 residues long: Ribosome-binding factor A (129 aa).

Belongs to the RbfA family. As to quaternary structure, monomer. Binds 30S ribosomal subunits, but not 50S ribosomal subunits or 70S ribosomes.

The protein resides in the cytoplasm. One of several proteins that assist in the late maturation steps of the functional core of the 30S ribosomal subunit. Associates with free 30S ribosomal subunits (but not with 30S subunits that are part of 70S ribosomes or polysomes). Required for efficient processing of 16S rRNA. May interact with the 5'-terminal helix region of 16S rRNA. The chain is Ribosome-binding factor A from Marinomonas sp. (strain MWYL1).